We begin with the raw amino-acid sequence, 231 residues long: 7-cyano-7-deazaguanine synthase (231 aa).

8-18 (FSGGQDSTTCL) is a binding site for ATP. Zn(2+)-binding residues include C188, C197, C200, and C203.

It belongs to the QueC family. Zn(2+) serves as cofactor.

It catalyses the reaction 7-carboxy-7-deazaguanine + NH4(+) + ATP = 7-cyano-7-deazaguanine + ADP + phosphate + H2O + H(+). Its pathway is purine metabolism; 7-cyano-7-deazaguanine biosynthesis. Catalyzes the ATP-dependent conversion of 7-carboxy-7-deazaguanine (CDG) to 7-cyano-7-deazaguanine (preQ(0)). In Salmonella choleraesuis (strain SC-B67), this protein is 7-cyano-7-deazaguanine synthase.